Reading from the N-terminus, the 856-residue chain is Centrosomal protein of 97 kDa (856 aa).

LRR repeat units lie at residues 37-58 (DVHTLILDKNQIIKLENLEKCK), 59-80 (QLIQLSVANNRLVRMMGVAKLT), 81-102 (QLRVLNLPHNSIGCVEGLKDLV), 103-124 (HLEWLNLAGNNLKTMEQVNSCT), 125-146 (ALQHLDLSDNNIPQIGDVSKLI), 147-168 (SLKTLLLHGNIITSLRMAPAYL), 171-192 (NLSILSLAENEIRDLNEISFLA), and 196-205 (ELEQLSIMNN). An LRRCT domain is found at 211 to 249 (TPSIPGFDYRPFIVSWCLNLRVLDGYVISQKESLKAEWL). The CCP110-binding stretch occupies residues 300-742 (HQRQLMSQSQ…KCVKDRDSEA (443 aa)). Phosphoserine occurs at positions 308 and 410. The tract at residues 430-451 (DDGADEFTKGLENQDEDKDKEK) is disordered. Position 497 is a phosphoserine (Ser497). Polar residues predominate over residues 498–513 (LTSLPESAGHSASRTE). The interval 498 to 525 (LTSLPESAGHSASRTEANSEEAMSPATS) is disordered. Ser521 carries the post-translational modification Phosphoserine. Thr534 carries the post-translational modification Phosphothreonine. Residues 550–579 (LNAAATKLQACWRGFYTRNYNQQAKGVRYE) enclose the IQ domain. The segment at 579-853 (EIRLRRMQEH…FQGLHVGVTV (275 aa)) is interaction with MPHOSPH9. 2 disordered regions span residues 646-672 (PPISSTLASPKPPLFPHHQDPSSDQSS) and 737-840 (DRDS…PPEC). Residues 737–752 (DRDSEATAEEHSDCSR) are compositionally biased toward basic and acidic residues. Residues 753 to 773 (ESSASEQDNTLLQQYLTSVQQ) are compositionally biased toward polar residues. Phosphoserine is present on Ser755. Over residues 776 to 787 (DAAEAADSDDVA) the composition is skewed to acidic residues. A compositionally biased stretch (basic and acidic residues) spans 799 to 811 (ERFDASSDSETHR). Residues 812 to 833 (VASTSQDEISQTPENCQLNEEA) are compositionally biased toward polar residues.

In terms of assembly, interacts with CALM1, CEP76, KIF24 and TALPID3. Interacts with CCP110. ENKD1 competes with CEP97 for binding to CCP110, destabilizing the interaction between CP110 and CEP97 which promotes the removal of CCP110 and CEP97 from the mother centriole and allows the initiation of ciliogenesis. Via its interaction with CCP110, may indirectly interact with HERC2 and NEURL4. Interacts with MPHOSPH9.

It is found in the cytoplasm. The protein resides in the cytoskeleton. The protein localises to the microtubule organizing center. It localises to the centrosome. Its subcellular location is the centriole. Its function is as follows. Acts as a key negative regulator of ciliogenesis in collaboration with CCP110 by capping the mother centriole thereby preventing cilia formation. Required for recruitment of CCP110 to the centrosome. The polypeptide is Centrosomal protein of 97 kDa (Cep97) (Mus musculus (Mouse)).